The following is a 429-amino-acid chain: Xaa-Pro dipeptidase (429 aa).

Residues Asp241, Asp252, His334, Glu372, and Glu411 each coordinate Mn(2+).

This sequence belongs to the peptidase M24B family. Bacterial-type prolidase subfamily. Mn(2+) serves as cofactor.

It catalyses the reaction Xaa-L-Pro dipeptide + H2O = an L-alpha-amino acid + L-proline. Functionally, splits dipeptides with a prolyl residue in the C-terminal position. The polypeptide is Xaa-Pro dipeptidase (Marinobacter nauticus (strain ATCC 700491 / DSM 11845 / VT8) (Marinobacter aquaeolei)).